The chain runs to 156 residues: Small ribosomal subunit protein uS7 (156 aa).

This sequence belongs to the universal ribosomal protein uS7 family. Part of the 30S ribosomal subunit. Contacts proteins S9 and S11.

Its function is as follows. One of the primary rRNA binding proteins, it binds directly to 16S rRNA where it nucleates assembly of the head domain of the 30S subunit. Is located at the subunit interface close to the decoding center, probably blocks exit of the E-site tRNA. This is Small ribosomal subunit protein uS7 from Syntrophotalea carbinolica (strain DSM 2380 / NBRC 103641 / GraBd1) (Pelobacter carbinolicus).